A 128-amino-acid chain; its full sequence is Ribonuclease P protein component 4 (128 aa).

Residues C67, C70, C96, and C99 each contribute to the Zn(2+) site.

It belongs to the eukaryotic/archaeal RNase P protein component 4 family. In terms of assembly, consists of a catalytic RNA component and at least 4-5 protein subunits. Requires Zn(2+) as cofactor.

The protein localises to the cytoplasm. The catalysed reaction is Endonucleolytic cleavage of RNA, removing 5'-extranucleotides from tRNA precursor.. Part of ribonuclease P, a protein complex that generates mature tRNA molecules by cleaving their 5'-ends. The chain is Ribonuclease P protein component 4 from Methanopyrus kandleri (strain AV19 / DSM 6324 / JCM 9639 / NBRC 100938).